The primary structure comprises 715 residues: Fatty acid oxidation complex subunit alpha (715 aa).

An enoyl-CoA hydratase region spans residues 1–190 (MTTTSAFMLN…KAGLVDDVVP (190 aa)). Residues 306–715 (GPLNSVGILG…WTNGETDQGN (410 aa)) form a 3-hydroxyacyl-CoA dehydrogenase region.

In the N-terminal section; belongs to the enoyl-CoA hydratase/isomerase family. This sequence in the central section; belongs to the 3-hydroxyacyl-CoA dehydrogenase family. Heterotetramer of two alpha chains (FadJ) and two beta chains (FadI).

The protein localises to the cytoplasm. The catalysed reaction is a (3S)-3-hydroxyacyl-CoA = a (2E)-enoyl-CoA + H2O. The enzyme catalyses a 4-saturated-(3S)-3-hydroxyacyl-CoA = a (3E)-enoyl-CoA + H2O. It carries out the reaction a (3S)-3-hydroxyacyl-CoA + NAD(+) = a 3-oxoacyl-CoA + NADH + H(+). It catalyses the reaction (3S)-3-hydroxybutanoyl-CoA = (3R)-3-hydroxybutanoyl-CoA. Its pathway is lipid metabolism; fatty acid beta-oxidation. Functionally, catalyzes the formation of a hydroxyacyl-CoA by addition of water on enoyl-CoA. Also exhibits 3-hydroxyacyl-CoA epimerase and 3-hydroxyacyl-CoA dehydrogenase activities. In Salmonella enteritidis PT4 (strain P125109), this protein is Fatty acid oxidation complex subunit alpha.